The primary structure comprises 98 residues: Defensin (98 aa).

Positions 1-19 are cleaved as a signal peptide; that stretch reads MRTFLVTFVLVVVVGVISA. Positions 20–58 are excised as a propeptide; sequence YPSNPVEVEAEDFDAQDPDLQTFQDTFYEVPQVHSRQKR. 3 disulfides stabilise this stretch: Cys61–Cys88, Cys74–Cys94, and Cys78–Cys96.

As to expression, is synthesized by the fat body and eventually secreted into the hemolymph.

Its subcellular location is the secreted. Functionally, has antiparasitic activity against promastigote forms of L.major, and antibacterial activity against Gram-positive bacterium S.aureus. Has antifungal activity against the yeasts C.albicans and S.cerevisiae, but not C.glabrata. Has antifungal activity against filamentous fungi A.fumigatus, F.culmorum, F.oxysporum, N.crassa, T.viride and T.mentagrophytes, but not B.bassiana. The polypeptide is Defensin (Phlebotomus duboscqi (Sandfly)).